A 441-amino-acid polypeptide reads, in one-letter code: Maltose-6'-phosphate glucosidase (441 aa).

Position 4-70 (4-70 (FSILIAGGGS…PQIKFSYSTN (67 aa))) interacts with NAD(+). Arg93 and Asn147 together coordinate substrate. Cys169 serves as a coordination point for Mn(2+). Asp170 functions as the Proton donor in the catalytic mechanism. His200 is a binding site for Mn(2+). The active-site Proton acceptor is the Tyr264. Position 284 (Arg284) interacts with substrate.

It belongs to the glycosyl hydrolase 4 family. In terms of assembly, homotetramer. NAD(+) is required as a cofactor. Mn(2+) serves as cofactor. It depends on Fe(2+) as a cofactor. Requires Co(2+) as cofactor. The cofactor is Ni(2+).

The catalysed reaction is alpha-maltose 6'-phosphate + H2O = D-glucose 6-phosphate + D-glucose. The protein operates within glycan degradation; maltose degradation. In terms of biological role, hydrolyzes a wide variety of 6-phospho-alpha-D-glucosides including maltose-6'P, trehalose-6P and the 6'-phosphorylated derivatives of the five linkage-isomeric alpha-D-glucosyl-D-fructoses: trehalulose-6'P, turanose-6'P, maltulose-6'P, leucrose-6'P, and palatinose-6'P. However, sucrose-6P is not a substrate for MalH, and this enzyme also fails to hydrolyze beta-O-linked phosphorylated disaccharides such as cellobiose-6'P and gentobiose-6'P. In Fusobacterium mortiferum, this protein is Maltose-6'-phosphate glucosidase (malH).